The primary structure comprises 2605 residues: Non-reducing polyketide synthase dbaI (2605 aa).

Residues 97–243 (PNTLLIPLVM…PASEISDLHR (147 aa)) form an N-terminal acylcarrier protein transacylase domain (SAT) region. Residue cysteine 144 is the Nucleophile; for transacylase activity of the active site. The active-site Proton donor/acceptor; for transacylase activity is histidine 262. A Ketosynthase family 3 (KS3) domain is found at 382–798 (ENDIAVVGMS…GSNASIVVTQ (417 aa)). Active-site for beta-ketoacyl synthase activity residues include cysteine 547, histidine 682, and histidine 721. Residues 908-1195 (FGGQVSTFVG…VTNMASRALG (288 aa)) are malonyl-CoA:ACP transacylase (MAT) domain. Residues 1285–1420 (PNTLLTFVGY…GRVIFRSISD (136 aa)) are N-terminal hotdog fold. The PKS/mFAS DH domain occupies 1285–1596 (PNTLLTFVGY…YVKIPKASMS (312 aa)). Positions 1316–1594 (LIRGHIIAQT…ISYVKIPKAS (279 aa)) are product template (PT) domain. Histidine 1320 (proton acceptor; for dehydratase activity) is an active-site residue. Residues 1447–1596 (EVDEVLQNRN…YVKIPKASMS (150 aa)) form a C-terminal hotdog fold region. Aspartate 1504 acts as the Proton donor; for dehydratase activity in catalysis. The Carrier domain occupies 1665–1739 (GQLTQRIKSI…SLIKCVRKAM (75 aa)). Serine 1699 is subject to O-(pantetheine 4'-phosphoryl)serine. Positions 1742 to 1780 (DADSAEYTTEQSTSEAADSDDKSTNYTTPSTPGEEALDM) are disordered. A compositionally biased stretch (polar residues) spans 1747–1757 (EYTTEQSTSEA). Residues 1963-2151 (DWPLNRLFYR…VGYGHVDWTD (189 aa)) are methyltransferase domain. An NADPH-binding (R) domain region spans residues 2230–2473 (VTGATGSLGC…LSWTPVDVVA (244 aa)).

The enzyme catalyses 4 malonyl-CoA + acetyl-CoA + AH2 + S-adenosyl-L-methionine + 3 H(+) = 2,4-dihydroxy-3-methyl-6-(2-oxopropyl)benzaldehyde + A + S-adenosyl-L-homocysteine + 4 CO2 + 5 CoA + H2O. It participates in secondary metabolite biosynthesis. Non-reducing polyketide synthase; part of the gene cluster that mediates the biosynthesis of the antibiotic 2,4-dihydroxy-3-methyl-6-(2-oxopropyl)benzaldehyde (DHMBA) and its derivatives. The direct non-reducing polyketide synthase dbaI product is 2,4-dihydroxy-3-methyl-6-(2-oxopropyl)benzaldehyde (DHMBA), produced by condensation of one acetyl-CoA starter unit with 4 malonyl-CoA units and one methylation step. The FAD-dependent monooxygenase dbaH is responsible for the synthesis of yellow pigments derived from the oxidation of DHMBA. The roles of dbaB, C, E and F have still to be determined. This Emericella nidulans (strain FGSC A4 / ATCC 38163 / CBS 112.46 / NRRL 194 / M139) (Aspergillus nidulans) protein is Non-reducing polyketide synthase dbaI.